A 62-amino-acid polypeptide reads, in one-letter code: Sperm protamine P1 (62 aa).

The segment at 1–62 (MARYRRHSRS…RYSRRGRRRY (62 aa)) is disordered.

It belongs to the protamine P1 family. As to expression, testis.

The protein localises to the nucleus. The protein resides in the chromosome. Its function is as follows. Protamines substitute for histones in the chromatin of sperm during the haploid phase of spermatogenesis. They compact sperm DNA into a highly condensed, stable and inactive complex. This chain is Sperm protamine P1 (PRM1), found in Antechinomys laniger (Eastern jerboa marsupial).